The sequence spans 288 residues: Bis(5'-nucleosyl)-tetraphosphatase, symmetrical (288 aa).

It belongs to the Ap4A hydrolase family.

It carries out the reaction P(1),P(4)-bis(5'-adenosyl) tetraphosphate + H2O = 2 ADP + 2 H(+). In terms of biological role, hydrolyzes diadenosine 5',5'''-P1,P4-tetraphosphate to yield ADP. This chain is Bis(5'-nucleosyl)-tetraphosphatase, symmetrical, found in Pseudomonas putida (strain GB-1).